The following is a 134-amino-acid chain: Small ribosomal subunit protein uS17c (134 aa).

The transit peptide at 1–37 (HHFFTGNGIGLNRFSNPISSPQTQTQTRSLPFPAIKA) directs the protein to the chloroplast. Positions 106–134 (FLAVPAPSRKSKKAGSSGELGIPLQSQQE) are disordered.

This sequence belongs to the universal ribosomal protein uS17 family. In terms of assembly, part of the 30S ribosomal subunit.

It is found in the plastid. The protein resides in the chloroplast. Its function is as follows. One of the primary rRNA binding proteins, it binds specifically to the 5'-end of 16S ribosomal RNA. In Pisum sativum (Garden pea), this protein is Small ribosomal subunit protein uS17c (RPS17).